Here is a 135-residue protein sequence, read N- to C-terminus: Ribosomal RNA large subunit methyltransferase H (135 aa).

S-adenosyl-L-methionine-binding positions include leucine 52, glycine 83, and 102–107 (LSSLTL).

Belongs to the RNA methyltransferase RlmH family. In terms of assembly, homodimer.

The protein localises to the cytoplasm. The enzyme catalyses pseudouridine(1915) in 23S rRNA + S-adenosyl-L-methionine = N(3)-methylpseudouridine(1915) in 23S rRNA + S-adenosyl-L-homocysteine + H(+). Its function is as follows. Specifically methylates the pseudouridine at position 1915 (m3Psi1915) in 23S rRNA. This is Ribosomal RNA large subunit methyltransferase H from Polynucleobacter necessarius subsp. necessarius (strain STIR1).